The primary structure comprises 209 residues: MPEHAAPSYPFVYLASQSPRRRELLDQLGVRYELLAPAPDEDAEALEAELPGEAPDHYVLRVCVAKAQAARARLVARGLPAAPVLVADTTVTIDGAILGKPADAADALAMLARLAGRTHDVLTALAVIDATGELMPPALSRSAVRFAPAAREALARYVETGEPFGKAGAYAIQGRAAEFVERIDGSHSGIMGLPLFETAALLRAAHVAF.

The Proton acceptor role is filled by aspartate 88.

It belongs to the Maf family. YhdE subfamily. A divalent metal cation is required as a cofactor.

It localises to the cytoplasm. The enzyme catalyses dTTP + H2O = dTMP + diphosphate + H(+). The catalysed reaction is UTP + H2O = UMP + diphosphate + H(+). Functionally, nucleoside triphosphate pyrophosphatase that hydrolyzes dTTP and UTP. May have a dual role in cell division arrest and in preventing the incorporation of modified nucleotides into cellular nucleic acids. The sequence is that of dTTP/UTP pyrophosphatase from Burkholderia mallei (strain ATCC 23344).